A 117-amino-acid polypeptide reads, in one-letter code: Protein OPG035 (117 aa).

Belongs to the poxviridae OPG035 family.

Its function is as follows. Bcl-2-like protein which contributes to virulence by preventing host NF-kappa-B activation in response to pro-inflammatory stimuli such as TNF-alpha or IL1B. The polypeptide is Protein OPG035 (OPG035) (Homo sapiens (Human)).